The chain runs to 357 residues: Arginine kinase (357 aa).

The residue at position 2 (alanine 2) is an N-acetylalanine. A Phosphagen kinase N-terminal domain is found at 9–91 (KLEEGFKKLE…FDPIIEDYHK (83 aa)). Residue 64–68 (GVGVY) participates in L-arginine binding. In terms of domain architecture, Phosphagen kinase C-terminal spans 119-356 (FVISTRVRCG…LELIKIEKEM (238 aa)). ATP-binding positions include 122-126 (STRVR) and histidine 185. Glutamate 225 contributes to the L-arginine binding site. ATP is bound at residue arginine 229. Residue cysteine 271 participates in L-arginine binding. ATP is bound by residues 280–284 (RASVH) and 309–314 (RGTRGE). L-arginine is bound at residue glutamate 314.

The protein belongs to the ATP:guanido phosphotransferase family.

It carries out the reaction L-arginine + ATP = N(omega)-phospho-L-arginine + ADP + H(+). The sequence is that of Arginine kinase from Carcinus maenas (Common shore crab).